A 596-amino-acid chain; its full sequence is Fructan 1-exohydrolase w2 (596 aa).

The N-terminal stretch at 1–20 (MAQAWAFLLPVLVLGSYVTS) is a signal peptide. Residue Asp75 is part of the active site. Residues Asn168, Asn236, and Asn248 are each glycosylated (N-linked (GlcNAc...) asparagine). Cys446 and Cys492 are disulfide-bonded. Residue Asn567 is glycosylated (N-linked (GlcNAc...) asparagine).

This sequence belongs to the glycosyl hydrolase 32 family.

The enzyme catalyses Hydrolysis of terminal, non-reducing (2-&gt;1)-linked beta-D-fructofuranose residues in fructans.. Inhibited by sucrose. Hydrolyzes inulin-type beta-(2,1)-fructans, but not beta-(2,1)-linkages in branched fructans. Has low activity against beta-(2,6)-linked fructans. May play a role as a beta-(2,1)-trimmer during graminan biosynthesis. In Triticum aestivum (Wheat), this protein is Fructan 1-exohydrolase w2.